The chain runs to 482 residues: O-methyltransferase tpcA (482 aa).

S-adenosyl-L-methionine is bound by residues 293 to 294 (GG), aspartate 316, 348 to 349 (SF), and arginine 364. Histidine 368 (proton acceptor) is an active-site residue.

This sequence belongs to the class I-like SAM-binding methyltransferase superfamily. Cation-independent O-methyltransferase family. As to expression, specifically expressed in conidia.

It functions in the pathway secondary metabolite biosynthesis. In terms of biological role, O-methyltransferase; part of the gene cluster that mediates the biosynthesis of trypacidin, a mycotoxin with antiprotozoal activity and that plays a role in the infection process. The pathway begins with the synthesis of atrochrysone thioester by the polyketide synthase (PKS) tpcC. The atrochrysone carboxyl ACP thioesterase tpcB then breaks the thioester bond and releases the atrochrysone carboxylic acid from tpcC. The decarboxylase tpcK converts atrochrysone carboxylic acid to atrochrysone which is further reduced into emodin anthrone. The next step is performed by the emodin anthrone oxygenase tpcL that catalyzes the oxidation of emodinanthrone to emodin. Emodin O-methyltransferase encoded by tpcA catalyzes methylation of the 8-hydroxy group of emodin to form questin. Ring cleavage of questin by questin oxidase tpcI leads to desmethylsulochrin via several intermediates including questin epoxide. Another methylation step catalyzed by tpcM leads to the formation of sulochrin which is further converted to monomethylsulfochrin by tpcH. Finally, the tpcJ catalyzes the conversion of monomethylsulfochrin to trypacidin. Trypacidin is toxic for human pulmonary and bronchial epithelial cells by initiating the intracellular formation of nitric oxide (NO) and hydrogen peroxide (H(2)O(2)), thus triggering host necrotic cell death. The trypacidin pathway is also able to produce endocrocin via a distinct route from the endocrocin Enc pathway. The chain is O-methyltransferase tpcA from Aspergillus fumigatus (strain ATCC MYA-4609 / CBS 101355 / FGSC A1100 / Af293) (Neosartorya fumigata).